A 204-amino-acid chain; its full sequence is Urease accessory protein UreE (204 aa).

A compositionally biased stretch (basic and acidic residues) spans 172-190 (HGHAHSHDHDHDHDHDHQH). The tract at residues 172–204 (HGHAHSHDHDHDHDHDHQHGPGCTHGHHGHDHH) is disordered.

The protein belongs to the UreE family.

The protein localises to the cytoplasm. In terms of biological role, involved in urease metallocenter assembly. Binds nickel. Probably functions as a nickel donor during metallocenter assembly. The polypeptide is Urease accessory protein UreE (Burkholderia orbicola (strain AU 1054)).